A 247-amino-acid polypeptide reads, in one-letter code: Carboxy-S-adenosyl-L-methionine synthase (247 aa).

S-adenosyl-L-methionine-binding positions include Tyr-39, 64–66 (GCS), 89–90 (DN), 117–118 (DI), Asn-132, and Arg-199.

This sequence belongs to the class I-like SAM-binding methyltransferase superfamily. Cx-SAM synthase family. As to quaternary structure, homodimer.

It catalyses the reaction prephenate + S-adenosyl-L-methionine = carboxy-S-adenosyl-L-methionine + 3-phenylpyruvate + H2O. In terms of biological role, catalyzes the conversion of S-adenosyl-L-methionine (SAM) to carboxy-S-adenosyl-L-methionine (Cx-SAM). The protein is Carboxy-S-adenosyl-L-methionine synthase of Pectobacterium atrosepticum (strain SCRI 1043 / ATCC BAA-672) (Erwinia carotovora subsp. atroseptica).